The sequence spans 89 residues: Small ribosomal subunit protein uS17 (89 aa).

It belongs to the universal ribosomal protein uS17 family. Part of the 30S ribosomal subunit.

Functionally, one of the primary rRNA binding proteins, it binds specifically to the 5'-end of 16S ribosomal RNA. This Aromatoleum aromaticum (strain DSM 19018 / LMG 30748 / EbN1) (Azoarcus sp. (strain EbN1)) protein is Small ribosomal subunit protein uS17.